Reading from the N-terminus, the 102-residue chain is Small ribosomal subunit protein uS10 (102 aa).

Belongs to the universal ribosomal protein uS10 family. Part of the 30S ribosomal subunit.

In terms of biological role, involved in the binding of tRNA to the ribosomes. This chain is Small ribosomal subunit protein uS10, found in Treponema pallidum (strain Nichols).